The following is a 100-amino-acid chain: Putative pterin-4-alpha-carbinolamine dehydratase 2 (100 aa).

This sequence belongs to the pterin-4-alpha-carbinolamine dehydratase family.

The enzyme catalyses (4aS,6R)-4a-hydroxy-L-erythro-5,6,7,8-tetrahydrobiopterin = (6R)-L-erythro-6,7-dihydrobiopterin + H2O. The sequence is that of Putative pterin-4-alpha-carbinolamine dehydratase 2 from Cupriavidus pinatubonensis (strain JMP 134 / LMG 1197) (Cupriavidus necator (strain JMP 134)).